The following is a 57-amino-acid chain: Large ribosomal subunit protein bL32 (57 aa).

It belongs to the bacterial ribosomal protein bL32 family.

The chain is Large ribosomal subunit protein bL32 from Lysinibacillus sphaericus (strain C3-41).